The chain runs to 243 residues: Vesicle-associated membrane protein-associated protein B (243 aa).

A2 is modified (N-acetylalanine). The Cytoplasmic segment spans residues 2–218; that stretch reads AKVEQVLSLE…AALAATGKEE (217 aa). In terms of domain architecture, MSP spans 7-124; that stretch reads VLSLEPQHEL…MDSKLRCVFE (118 aa). Residue S146 is modified to Phosphoserine. A Glycyl lysine isopeptide (Lys-Gly) (interchain with G-Cter in SUMO1) cross-link involves residue K147. Phosphoserine occurs at positions 156 and 159. Residues 161–196 are a coiled coil; the sequence is LDDTEVKKVMEECRRLQGEVQRLREESRQLKEEDGL. S206 is subject to Phosphoserine. Residues 219–239 traverse the membrane as a helical; Anchor for type IV membrane protein segment; the sequence is GLSARLLALVVLFFIVGVIIG.

Belongs to the VAMP-associated protein (VAP) (TC 9.B.17) family. As to quaternary structure, homodimer, and heterodimer with VAPA. Interacts with VAMP1 and VAMP2. Interacts (via MSP domain) with ZFYVE27. Interacts with RMDN3. Interacts with KIF5A in a ZFYVE27-dependent manner. Interacts (via MSP domain) with STARD3 (via phospho-FFAT motif). Interacts with STARD3NL (via FFAT motif). Interacts with CERT1. Interacts with PLEKHA3 and SACM1L to form a ternary complex. Interacts with VPS13A (via FFAT motif). Interacts with RB1CC1 (via phosphorylated FFAT motif), MIGA2 (via phosphorylated FFAT motif), RMDN3 (via phosphorylated FFAT motif), OSBPL1A (via FFAT motif), KCNB1 (via phosphorylated FFAT motif) and KCNB2 (via phosphorylated FFAT motif). Interacts (via MSP domain) with WDR44 (via FFAT motif); the interactions connect the endoplasmic reticulum (ER) with the endosomal tubule.

Its subcellular location is the endoplasmic reticulum membrane. Endoplasmic reticulum (ER)-anchored protein that mediates the formation of contact sites between the ER and endosomes via interaction with FFAT motif-containing proteins such as STARD3 or WDR44. Interacts with STARD3 in a FFAT motif phosphorylation dependent manner. Via interaction with WDR44 participates in neosynthesized protein export. Participates in the endoplasmic reticulum unfolded protein response (UPR) by inducing ERN1/IRE1 activity. Involved in cellular calcium homeostasis regulation. This Mus musculus (Mouse) protein is Vesicle-associated membrane protein-associated protein B.